The sequence spans 427 residues: Enolase (427 aa).

Glutamine 163 serves as a coordination point for (2R)-2-phosphoglycerate. The Proton donor role is filled by glutamate 205. Aspartate 242, glutamate 285, and aspartate 312 together coordinate Mg(2+). (2R)-2-phosphoglycerate-binding residues include lysine 337, arginine 366, serine 367, and lysine 388. Lysine 337 serves as the catalytic Proton acceptor.

It belongs to the enolase family. The cofactor is Mg(2+).

Its subcellular location is the cytoplasm. It localises to the secreted. The protein localises to the cell surface. It carries out the reaction (2R)-2-phosphoglycerate = phosphoenolpyruvate + H2O. Its pathway is carbohydrate degradation; glycolysis; pyruvate from D-glyceraldehyde 3-phosphate: step 4/5. Its function is as follows. Catalyzes the reversible conversion of 2-phosphoglycerate (2-PG) into phosphoenolpyruvate (PEP). It is essential for the degradation of carbohydrates via glycolysis. The chain is Enolase from Ralstonia pickettii (strain 12J).